The sequence spans 249 residues: Cis-4-hydroxycyclohexanecarboxylate dehydrogenase (249 aa).

NAD(+) contacts are provided by Asp38, Asp63, Val64, Asn90, Tyr156, Lys160, Ala189, and Thr191. Tyr156 acts as the Proton acceptor in catalysis.

It belongs to the short-chain dehydrogenases/reductases (SDR) family. In terms of assembly, homotetramer.

It carries out the reaction cis-4-hydroxycyclohexane-1-carboxylate + NAD(+) = 4-oxocyclohexane-1-carboxylate + NADH + H(+). Its function is as follows. Dehydrogenase involved in a cyclohexanecarboxylate (CHCA) degradation pathway. Catalyzes the NAD(+)-dependent dehydrogenation of cis-4-hydroxycyclohexanecarboxylate (cis-4-hydroxyCHCA) to form 4-oxocyclohexanecarboxylate (4-oxoCHCA). Is highly specific for the cis-4-hydroxy derivative and shows only weak activity with trans-4-hydroxyCHCA. Cannot use NADP(+). The sequence is that of Cis-4-hydroxycyclohexanecarboxylate dehydrogenase from Sinomonas cyclohexanicum (Corynebacterium cyclohexanicum).